The following is a 534-amino-acid chain: Zinc finger protein 703-A (534 aa).

Disordered regions lie at residues 1–35 (MNCS…THPV), 90–251 (SQIG…VAPV), and 300–320 (QLPG…LTGA). Composition is skewed to low complexity over residues 15-34 (QSSS…PTHP), 115-124 (RSSSLKLGES), and 146-155 (GSSAGGSADK). The span at 173 to 182 (SPSSRVSSPG) shows a compositional bias: polar residues. A compositionally biased stretch (basic and acidic residues) spans 185–200 (CDSKNNESQEKKEPEA). Over residues 204-217 (SLETSQANPTLTRA) the composition is skewed to polar residues. Residues 218–229 (SISNSSAESSQS) are compositionally biased toward low complexity. Polar residues predominate over residues 230–239 (GDVTPSSKSD). The C2H2-type zinc finger occupies 406–434 (HICNWVSASGPCDKRFATSEELLAHLRTH).

The protein belongs to the Elbow/Noc family.

It localises to the nucleus. The protein resides in the cytoplasm. Transcriptional corepressor which does not bind directly to DNA and may regulate transcription through recruitment of histone deacetylases to gene promoters. Regulates cell adhesion, migration and proliferation. Involved in specification of the lateral neural plate border (NPB). May be required for segmental gene expression during hindbrain development. In Xenopus laevis (African clawed frog), this protein is Zinc finger protein 703-A (znf703-a).